Here is a 60-residue protein sequence, read N- to C-terminus: MAKGKENRIVITLECTEAKKEGVPVSRYTTTKNKKNTTERLILKKYNPNLKRHTEHKEIK.

This sequence belongs to the bacterial ribosomal protein bL33 family.

This chain is Large ribosomal subunit protein bL33, found in Chlorobaculum tepidum (strain ATCC 49652 / DSM 12025 / NBRC 103806 / TLS) (Chlorobium tepidum).